The primary structure comprises 393 residues: tRNA(Met) cytidine acetate ligase (393 aa).

ATP-binding residues include Gly81, Asn142, and Arg167.

This sequence belongs to the TmcAL family.

It localises to the cytoplasm. The catalysed reaction is cytidine(34) in elongator tRNA(Met) + acetate + ATP = N(4)-acetylcytidine(34) in elongator tRNA(Met) + AMP + diphosphate. Catalyzes the formation of N(4)-acetylcytidine (ac(4)C) at the wobble position of elongator tRNA(Met), using acetate and ATP as substrates. First activates an acetate ion to form acetyladenylate (Ac-AMP) and then transfers the acetyl group to tRNA to form ac(4)C34. In Bacillus anthracis (strain A0248), this protein is tRNA(Met) cytidine acetate ligase.